The sequence spans 387 residues: Succinate--CoA ligase [ADP-forming] subunit beta (387 aa).

ATP is bound by residues K46, 53–55 (GRG), E99, C102, and E107. Mg(2+) contacts are provided by N196 and D210. Substrate is bound by residues N261 and 318–320 (GIV).

The protein belongs to the succinate/malate CoA ligase beta subunit family. Heterotetramer of two alpha and two beta subunits. The cofactor is Mg(2+).

It carries out the reaction succinate + ATP + CoA = succinyl-CoA + ADP + phosphate. The catalysed reaction is GTP + succinate + CoA = succinyl-CoA + GDP + phosphate. It participates in carbohydrate metabolism; tricarboxylic acid cycle; succinate from succinyl-CoA (ligase route): step 1/1. Succinyl-CoA synthetase functions in the citric acid cycle (TCA), coupling the hydrolysis of succinyl-CoA to the synthesis of either ATP or GTP and thus represents the only step of substrate-level phosphorylation in the TCA. The beta subunit provides nucleotide specificity of the enzyme and binds the substrate succinate, while the binding sites for coenzyme A and phosphate are found in the alpha subunit. The polypeptide is Succinate--CoA ligase [ADP-forming] subunit beta (Campylobacter hominis (strain ATCC BAA-381 / DSM 21671 / CCUG 45161 / LMG 19568 / NCTC 13146 / CH001A)).